Here is a 509-residue protein sequence, read N- to C-terminus: Glycogen synthase (509 aa).

An ADP-alpha-D-glucose-binding site is contributed by Lys-47.

Belongs to the glycosyltransferase 1 family. Bacterial/plant glycogen synthase subfamily.

It catalyses the reaction [(1-&gt;4)-alpha-D-glucosyl](n) + ADP-alpha-D-glucose = [(1-&gt;4)-alpha-D-glucosyl](n+1) + ADP + H(+). It participates in glycan biosynthesis; glycogen biosynthesis. Its function is as follows. Synthesizes alpha-1,4-glucan chains using ADP-glucose. This chain is Glycogen synthase, found in Xanthomonas oryzae pv. oryzae (strain MAFF 311018).